A 619-amino-acid polypeptide reads, in one-letter code: Zinc finger protein 131 (619 aa).

The BTB domain maps to 34 to 98; the sequence is TDITLIVDGH…TYTAKLMIQG (65 aa). A Nuclear localization signal 1 motif is present at residues 137-148; it reads TGKNEAKKRKIA. A Phosphoserine modification is found at S231. 3 consecutive C2H2-type zinc fingers follow at residues 261–283, 288–311, and 328–350; these read FHCEKCNRSFKLFYHFKEHMKSH, FKCEICNKRYLRESAWKQHLNCYH, and HICQYCDKQFDHFGHFKEHLRKH. Glycyl lysine isopeptide (Lys-Gly) (interchain with G-Cter in SUMO2) cross-links involve residues K289 and K295. Positions 317–328 match the Nuclear localization signal 2 motif; it reads VSKKQRTGKKIH. The C2H2-type 4; degenerate zinc finger occupies 356 to 381; that stretch reads FECSNCHERFARNSTLKCHLTACQTG. 2 C2H2-type zinc fingers span residues 392–414 and 420–443; these read YECQVCNSVFNSWDQFKDHLVIH and NHCTLCDLWFMQGNELRRHLSDAH. 2 stretches are compositionally biased toward basic and acidic residues: residues 574-587 and 595-612; these read QEEREPNHADAAME and LETKPSEYSQARKTENDR. The segment at 574-619 is disordered; that stretch reads QEEREPNHADAAMEEHEDAEGLETKPSEYSQARKTENDRTSLPVLE. A Glycyl lysine isopeptide (Lys-Gly) (interchain with G-Cter in SUMO) cross-link involves residue K598.

This sequence belongs to the krueppel C2H2-type zinc-finger protein family. Post-translationally, monosumoylated at Lys-598 by CBX4 and UHRF2. Sumoylation may potentiate ZNF131 inhibition of estrogen signaling. Sumoylation does not interfere with ubiquitination. In terms of processing, ubiquitinated. In terms of tissue distribution, ubiquitously expressed. Predominant expression is found in the developing central nervous system with strongest signals in the forebrain, midbrain, and hindbrain areas and in the neural tube.

Its subcellular location is the nucleus. Functionally, may be involved in transcriptional regulation as a repressor of ESR1/ER-alpha signaling. Plays a role during development and organogenesis as well as in the function of the adult central nervous system. This Mus musculus (Mouse) protein is Zinc finger protein 131 (Znf131).